The primary structure comprises 150 residues: Deoxyuridine 5'-triphosphate nucleotidohydrolase (150 aa).

Substrate-binding positions include 69 to 71, Asn-82, 86 to 88, and Met-96; these read RSG and LID.

It belongs to the dUTPase family. Mg(2+) serves as cofactor.

It catalyses the reaction dUTP + H2O = dUMP + diphosphate + H(+). It functions in the pathway pyrimidine metabolism; dUMP biosynthesis; dUMP from dCTP (dUTP route): step 2/2. Functionally, this enzyme is involved in nucleotide metabolism: it produces dUMP, the immediate precursor of thymidine nucleotides and it decreases the intracellular concentration of dUTP so that uracil cannot be incorporated into DNA. The chain is Deoxyuridine 5'-triphosphate nucleotidohydrolase from Alcanivorax borkumensis (strain ATCC 700651 / DSM 11573 / NCIMB 13689 / SK2).